The chain runs to 859 residues: Active breakpoint cluster region-related protein (859 aa).

Residues 31–84 are disordered; the sequence is AEGHEEQKGPPEGSETMPYIDESPTMSPQLSARSQGGGESISPTPPEGLAPGVE. The span at 54-64 shows a compositional bias: polar residues; sequence PTMSPQLSARS. Serine 57 carries the post-translational modification Phosphoserine. In terms of domain architecture, DH spans 91-284; the sequence is MRKLVLSGFL…QNFLSSINED (194 aa). Residues 301–459 enclose the PH domain; that stretch reads QLVKDGFLVE…WREAIQKLQK (159 aa). The C2 domain occupies 484-613; it reads TVHNIPVTSN…ESKNWHTDVI (130 aa). The Rho-GAP domain maps to 647–845; the sequence is VKISVVTKRE…YYLQHPPISF (199 aa).

Interacts with DLG4. As to expression, expressed in brain, including the cortex, hippocampus, cerebellum, and brainstem, as well as the spinal cord (at protein level).

Its subcellular location is the cell projection. The protein resides in the dendritic spine. The protein localises to the axon. It localises to the synapse. Functionally, protein with a unique structure having two opposing regulatory activities toward small GTP-binding proteins. The C-terminus is a GTPase-activating protein domain which stimulates GTP hydrolysis by RAC1, RAC2 and CDC42. Accelerates the intrinsic rate of GTP hydrolysis of RAC1 or CDC42, leading to down-regulation of the active GTP-bound form. The central Dbl homology (DH) domain functions as guanine nucleotide exchange factor (GEF) that modulates the GTPases CDC42, RHOA and RAC1. Promotes the conversion of CDC42, RHOA and RAC1 from the GDP-bound to the GTP-bound form. Functions as an important negative regulator of neuronal RAC1 activity. Regulates macrophage functions such as CSF-1 directed motility and phagocytosis through the modulation of RAC1 activity. The polypeptide is Active breakpoint cluster region-related protein (Rattus norvegicus (Rat)).